The chain runs to 468 residues: E3 ubiquitin-protein ligase RGLG2 (468 aa).

The interval 1–89 is disordered; the sequence is MGTGNSKENW…PSQSYGSDNK (89 aa). Gly2 carries the N-myristoyl glycine lipid modification. A compositionally biased stretch (low complexity) spans 12–45; it reads QSSFRSTSASSASPSSSSWASQQSYPQYGAESYN. Residues 46 to 65 are compositionally biased toward pro residues; it reads YPPPPSYAQPPEYTQPPPPL. The segment covering 66-84 has biased composition (low complexity); the sequence is YSTQPYSAPSYSAPPSQSY. The 221-residue stretch at 122–342 folds into the VWFA domain; the sequence is NLIVGIDFTK…KETEFALSAL (221 aa). The tract at residues 369-416 is disordered; sequence FPLPPPMRGGSSSYNSPKPSRLPSFKPSVPPHPTEGYHVRSSPVPPPT. The RING-type zinc finger occupies 425–458; it reads CPICLSNPKDMAFGCGHQTCCECGPDLQMCPICR.

Interacts with the heterodimer UBC35/UEV1B, UBC35 alone, PIN1, but not with UCB2, UCB9, UEV1B or UEV1C alone. Interacts with ERF053. In terms of processing, N-myristoylated. Ubiquitously expressed.

It is found in the cell membrane. Its subcellular location is the nucleus. The catalysed reaction is S-ubiquitinyl-[E2 ubiquitin-conjugating enzyme]-L-cysteine + [acceptor protein]-L-lysine = [E2 ubiquitin-conjugating enzyme]-L-cysteine + N(6)-ubiquitinyl-[acceptor protein]-L-lysine.. In terms of biological role, E3 ubiquitin-protein ligase that mediates the formation of 'Lys-63'-linked ubiquitin chains. Regulates apical dominance by acting on the auxin transport proteins abundance. Mediates ubiquitination and subsequent proteasomal degradation of ERF053 in response to drought stress. Acts as a negative regulator of drought stress response. In Arabidopsis thaliana (Mouse-ear cress), this protein is E3 ubiquitin-protein ligase RGLG2.